The sequence spans 365 residues: Aspartate-semialdehyde dehydrogenase (365 aa).

NADP(+) contacts are provided by Thr12, Gly13, Ser14, Val15, Ser37, Ser40, Leu85, and Asp86. The active-site Acyl-thioester intermediate is the Cys156. An NADP(+)-binding site is contributed by Gly188. His256 serves as the catalytic Proton acceptor. Asn343 contributes to the NADP(+) binding site.

It belongs to the aspartate-semialdehyde dehydrogenase family. Homotetramer; dimer of dimers.

The protein resides in the cytoplasm. The protein localises to the cytosol. It localises to the nucleus. The enzyme catalyses L-aspartate 4-semialdehyde + phosphate + NADP(+) = 4-phospho-L-aspartate + NADPH + H(+). It functions in the pathway amino-acid biosynthesis; L-methionine biosynthesis via de novo pathway; L-homoserine from L-aspartate: step 2/3. It participates in amino-acid biosynthesis; L-threonine biosynthesis; L-threonine from L-aspartate: step 2/5. Its activity is regulated as follows. Inhibited by the non-competitive inhibitors phthalaldehyde and naphthalene, the competitive inhibitor 1,4-benzoquinone and derivates such as 2-chloro-3-methoxy-1,4-naphthoquinone, 2,3-dichloro-1,4-naphthoquinone, 2-chloro-1,4-naphthoquinone, 2-bromo-1,4-naphthoquinone and 2,3-dichloro-5,8-dihydroxy-1,4-naphthoquinone, and 5-aminoisoquinoline. Inhibited by vinyl sulfones. In terms of biological role, catalyzes the NADPH-dependent formation of L-aspartate 4-semialdehyde (L-ASA) by the reductive dephosphorylation of 4-phospho-L-aspartate. Mediates the second step in the biosynthesis of amino acids that derive from aspartate (the aspartate family of amino acids), including methioinine and threonine, the latter of which is a precursor to isoleucine. This Candida albicans (strain SC5314 / ATCC MYA-2876) (Yeast) protein is Aspartate-semialdehyde dehydrogenase.